A 124-amino-acid chain; its full sequence is Small ribosomal subunit protein uS12 (124 aa).

Position 89 is a 3-methylthioaspartic acid (Asp-89). A disordered region spans residues 102–124 (LDTSGVNNRKHGRSKYGTKRPKS). Residues 109 to 124 (NRKHGRSKYGTKRPKS) are compositionally biased toward basic residues.

The protein belongs to the universal ribosomal protein uS12 family. As to quaternary structure, part of the 30S ribosomal subunit. Contacts proteins S8 and S17. May interact with IF1 in the 30S initiation complex.

In terms of biological role, with S4 and S5 plays an important role in translational accuracy. Functionally, interacts with and stabilizes bases of the 16S rRNA that are involved in tRNA selection in the A site and with the mRNA backbone. Located at the interface of the 30S and 50S subunits, it traverses the body of the 30S subunit contacting proteins on the other side and probably holding the rRNA structure together. The combined cluster of proteins S8, S12 and S17 appears to hold together the shoulder and platform of the 30S subunit. This Francisella tularensis subsp. novicida (strain U112) protein is Small ribosomal subunit protein uS12.